The chain runs to 484 residues: Ribosome biogenesis protein YTM1 (484 aa).

The ubiquitin-like (UBL) domain stretch occupies residues 13–95; the sequence is VKVTFTTTEA…ESNLTLQYVR (83 aa). WD repeat units follow at residues 122 to 161, 168 to 206, 216 to 255, 288 to 328, 330 to 373, 379 to 419, and 448 to 484; these read SPSGRWSGDNFQRGQDRILSASFDGLLRIWNASGQVIATS, GHTASIKAAKFLTNSQLASAGMDRTVRVWKYTESDHFSG, GHTGSIDSLEVDGASKRILTASADGSIGFWSTSKASAPEA, IHSA…VVTT, STSH…ATTS, GHAN…PATQ, and GEGCKVFGVVWDAELGIVSGAEDKRVQINAGRDVVAE.

Belongs to the WD repeat WDR12/YTM1 family. In terms of assembly, component of the NOP7 complex, composed of ERB1, NOP7 and YTM1. The complex is held together by ERB1, which interacts with NOP7 via its N-terminal domain and with YTM1 via a high-affinity interaction between the seven-bladed beta-propeller domains of the 2 proteins. The NOP7 complex associates with the 66S pre-ribosome. Interacts (via UBL domain) with MDN1 (via VWFA/MIDAS domain).

The protein resides in the nucleus. It localises to the nucleolus. The protein localises to the nucleoplasm. In terms of biological role, component of the NOP7 complex, which is required for maturation of the 25S and 5.8S ribosomal RNAs and formation of the 60S ribosome. This Chaetomium globosum (strain ATCC 6205 / CBS 148.51 / DSM 1962 / NBRC 6347 / NRRL 1970) (Soil fungus) protein is Ribosome biogenesis protein YTM1.